Reading from the N-terminus, the 368-residue chain is Phosphoribosylaminoimidazole-succinocarboxamide synthase (368 aa).

Belongs to the SAICAR synthetase family.

It catalyses the reaction 5-amino-1-(5-phospho-D-ribosyl)imidazole-4-carboxylate + L-aspartate + ATP = (2S)-2-[5-amino-1-(5-phospho-beta-D-ribosyl)imidazole-4-carboxamido]succinate + ADP + phosphate + 2 H(+). The protein operates within purine metabolism; IMP biosynthesis via de novo pathway; 5-amino-1-(5-phospho-D-ribosyl)imidazole-4-carboxamide from 5-amino-1-(5-phospho-D-ribosyl)imidazole-4-carboxylate: step 1/2. The chain is Phosphoribosylaminoimidazole-succinocarboxamide synthase from Vibrio cholerae serotype O1 (strain ATCC 39315 / El Tor Inaba N16961).